The following is an 896-amino-acid chain: NET1-associated nuclear protein 1 (896 aa).

WD repeat units follow at residues 295–334 (WHID…QQFL), 490–542 (LQDP…TNWN), 552–595 (GISV…SNWC), and 605–645 (NHFS…ESLE).

As to quaternary structure, interacts with snoRNA U3. Interacts with MPP10. Component of the ribosomal small subunit (SSU) processome composed of at least 40 protein subunits and snoRNA U3. In the absence of snoRNA3, forms a complex with other t-UTPs. This complex can associate with pre-18S ribosomal RNAs.

It localises to the nucleus. It is found in the nucleolus. Its function is as follows. Involved in nucleolar processing of pre-18S ribosomal RNA. Required for optimal pre-ribosomal RNA transcription by RNA polymerase I together with a subset of U3 proteins required for transcription (t-UTPs). The protein is NET1-associated nuclear protein 1 (NAN1) of Saccharomyces cerevisiae (strain ATCC 204508 / S288c) (Baker's yeast).